The primary structure comprises 282 residues: 5'-nucleotidase SurE (282 aa).

A divalent metal cation is bound by residues aspartate 12, aspartate 13, serine 43, and asparagine 98.

It belongs to the SurE nucleotidase family. Requires a divalent metal cation as cofactor.

It is found in the cytoplasm. The enzyme catalyses a ribonucleoside 5'-phosphate + H2O = a ribonucleoside + phosphate. Its function is as follows. Nucleotidase that shows phosphatase activity on nucleoside 5'-monophosphates. In Hyperthermus butylicus (strain DSM 5456 / JCM 9403 / PLM1-5), this protein is 5'-nucleotidase SurE.